A 171-amino-acid polypeptide reads, in one-letter code: 3-hydroxydecanoyl-[acyl-carrier-protein] dehydratase (171 aa).

Residue His-69 is part of the active site.

Belongs to the thioester dehydratase family. FabA subfamily. In terms of assembly, homodimer.

It is found in the cytoplasm. It catalyses the reaction a (3R)-hydroxyacyl-[ACP] = a (2E)-enoyl-[ACP] + H2O. The catalysed reaction is (3R)-hydroxydecanoyl-[ACP] = (2E)-decenoyl-[ACP] + H2O. It carries out the reaction (2E)-decenoyl-[ACP] = (3Z)-decenoyl-[ACP]. It participates in lipid metabolism; fatty acid biosynthesis. Its function is as follows. Necessary for the introduction of cis unsaturation into fatty acids. Catalyzes the dehydration of (3R)-3-hydroxydecanoyl-ACP to E-(2)-decenoyl-ACP and then its isomerization to Z-(3)-decenoyl-ACP. Can catalyze the dehydratase reaction for beta-hydroxyacyl-ACPs with saturated chain lengths up to 16:0, being most active on intermediate chain length. The sequence is that of 3-hydroxydecanoyl-[acyl-carrier-protein] dehydratase from Caulobacter sp. (strain K31).